A 298-amino-acid polypeptide reads, in one-letter code: uncharacterized protein (298 aa).

This is an uncharacterized protein from Methanocaldococcus jannaschii (strain ATCC 43067 / DSM 2661 / JAL-1 / JCM 10045 / NBRC 100440) (Methanococcus jannaschii).